We begin with the raw amino-acid sequence, 576 residues long: Eukaryotic translation initiation factor 2A (576 aa).

WD repeat units lie at residues 71-119 (LPAA…LVFS), 266-307 (DREG…VSII), 308-349 (PPAP…KKIT), and 351-396 (VEAA…MFYE). 2 disordered regions span residues 422 to 461 (SASL…QNST) and 475 to 505 (GSAN…NNKK). The segment covering 475–486 (GSANKHVNSSRQ) has biased composition (polar residues).

The protein belongs to the WD repeat EIF2A family.

It localises to the cytoplasm. Functionally, functions in the early steps of protein synthesis of a small number of specific mRNAs. Acts by directing the binding of methionyl-tRNAi to 40S ribosomal subunits. In contrast to the eIF-2 complex, it binds methionyl-tRNAi to 40S subunits in a codon-dependent manner, whereas the eIF-2 complex binds methionyl-tRNAi to 40S subunits in a GTP-dependent manner. The polypeptide is Eukaryotic translation initiation factor 2A (Schizosaccharomyces pombe (strain 972 / ATCC 24843) (Fission yeast)).